Reading from the N-terminus, the 656-residue chain is tRNA 5-methylaminomethyl-2-thiouridine biosynthesis bifunctional protein MnmC (656 aa).

Residues 1–236 (MTDPLIPAVL…KRAMLVGRFA (236 aa)) form a tRNA (mnm(5)s(2)U34)-methyltransferase region. The segment at 260–656 (IGTGLAGCAV…LRALRQGTVS (397 aa)) is FAD-dependent cmnm(5)s(2)U34 oxidoreductase.

In the N-terminal section; belongs to the methyltransferase superfamily. tRNA (mnm(5)s(2)U34)-methyltransferase family. This sequence in the C-terminal section; belongs to the DAO family. FAD is required as a cofactor.

The protein localises to the cytoplasm. The enzyme catalyses 5-aminomethyl-2-thiouridine(34) in tRNA + S-adenosyl-L-methionine = 5-methylaminomethyl-2-thiouridine(34) in tRNA + S-adenosyl-L-homocysteine + H(+). Functionally, catalyzes the last two steps in the biosynthesis of 5-methylaminomethyl-2-thiouridine (mnm(5)s(2)U) at the wobble position (U34) in tRNA. Catalyzes the FAD-dependent demodification of cmnm(5)s(2)U34 to nm(5)s(2)U34, followed by the transfer of a methyl group from S-adenosyl-L-methionine to nm(5)s(2)U34, to form mnm(5)s(2)U34. The polypeptide is tRNA 5-methylaminomethyl-2-thiouridine biosynthesis bifunctional protein MnmC (Paraburkholderia xenovorans (strain LB400)).